The chain runs to 196 residues: dTTP/UTP pyrophosphatase (196 aa).

Aspartate 75 serves as the catalytic Proton acceptor.

The protein belongs to the Maf family. YhdE subfamily. A divalent metal cation serves as cofactor.

The protein resides in the cytoplasm. It catalyses the reaction dTTP + H2O = dTMP + diphosphate + H(+). The catalysed reaction is UTP + H2O = UMP + diphosphate + H(+). In terms of biological role, nucleoside triphosphate pyrophosphatase that hydrolyzes dTTP and UTP. May have a dual role in cell division arrest and in preventing the incorporation of modified nucleotides into cellular nucleic acids. The polypeptide is dTTP/UTP pyrophosphatase (Wolbachia pipientis subsp. Culex pipiens (strain wPip)).